The chain runs to 106 residues: MALRERIRIRLKAYDHRILDQSTTEIVDTAKRTGATVAGPIPLPTSRSITTVLRSPHVDKKSREQFEIRTHKRLLDILEPTQQTVDALMKLDLPAGVDVEIKAFGK.

This sequence belongs to the universal ribosomal protein uS10 family. In terms of assembly, part of the 30S ribosomal subunit.

Involved in the binding of tRNA to the ribosomes. This is Small ribosomal subunit protein uS10 from Solibacter usitatus (strain Ellin6076).